Reading from the N-terminus, the 783-residue chain is Tripartite motif-containing protein 67 (783 aa).

The RING-type; degenerate zinc-finger motif lies at 7 to 42 (CPVCGSLFREPIILPCSHNVCLPCARTIAVQTPDGE). The B box-type 1; degenerate zinc-finger motif lies at 206 to 253 (AICQLCDRTPPEPAATLCEQCDVLYCSACQLKCHPSRGPFAKHRLVQP). Residues 247 to 295 (KHRLVQPPPPPPPPAEAASGPTGTAQGAPSGGGGCKSPGGAGAGATGGS) are disordered. The span at 252-261 (QPPPPPPPPA) shows a compositional bias: pro residues. The segment covering 275 to 293 (PSGGGGCKSPGGAGAGATG) has biased composition (gly residues). A B box-type 2 zinc finger spans residues 298–340 (RKFPTCPEHEMENYSMYCVSCRTPVCYLCLEEGRHAKHEVKPL). Zn(2+) contacts are provided by cysteine 303, histidine 306, cysteine 326, and histidine 332. Residues 345–382 (KQHKAQLSQALNGVSDKAKEAKEFLVQLKNILQQIQEN) adopt a coiled-coil conformation. Positions 448 to 506 (IKENDPSGFLQISDALIKRVQVSQEQWVKGALEPKVSAEFDLTLDSEPLLQAIHQLDFI) constitute a COS domain. The region spanning 513–607 (PPVPLLQLEK…KTVVLQTSDV (95 aa)) is the Fibronectin type-III domain. Residues 589-780 (NSSGVGPYSK…VPTNLGRPKL (192 aa)) form the B30.2/SPRY domain.

This sequence belongs to the TRIM/RBCC family.

Its subcellular location is the cytoplasm. It localises to the cytoskeleton. The polypeptide is Tripartite motif-containing protein 67 (TRIM67) (Homo sapiens (Human)).